Reading from the N-terminus, the 344-residue chain is MRKSVKVGNVVIGGGAPVSVQSMTTTKTADVERTISQIKRLERAGCEIIRVAVQDEEDAKAIRRIKEQIEIPLVADIQFDYRLAILSIDNGADKIRINPGNMSRDRLKDVVAAAKGKGIPIRVGANVGSIKRRTSERWKDLAESALEEVRLLEKEGFYDIVVSVKSSDILETIKANEYIAEKIEYPIHLGVTEAGVSETAVVKSSIAIGHLLLKNIGDTIRVSISGDPVREVIVGKKILIALGLREGVEVIACPTCGRAEIDVENMAKMIEENFFHVQKRLKIAVMGCVVNGIGEGKDADLGVAGLRDGAVIFVKGEIKERVSKEFVLERLKHYLNELLEEVER.

4 residues coordinate [4Fe-4S] cluster: Cys-253, Cys-256, Cys-288, and Glu-295.

This sequence belongs to the IspG family. The cofactor is [4Fe-4S] cluster.

It carries out the reaction (2E)-4-hydroxy-3-methylbut-2-enyl diphosphate + oxidized [flavodoxin] + H2O + 2 H(+) = 2-C-methyl-D-erythritol 2,4-cyclic diphosphate + reduced [flavodoxin]. The protein operates within isoprenoid biosynthesis; isopentenyl diphosphate biosynthesis via DXP pathway; isopentenyl diphosphate from 1-deoxy-D-xylulose 5-phosphate: step 5/6. Its function is as follows. Converts 2C-methyl-D-erythritol 2,4-cyclodiphosphate (ME-2,4cPP) into 1-hydroxy-2-methyl-2-(E)-butenyl 4-diphosphate. This is 4-hydroxy-3-methylbut-2-en-1-yl diphosphate synthase (flavodoxin) from Thermotoga petrophila (strain ATCC BAA-488 / DSM 13995 / JCM 10881 / RKU-1).